The chain runs to 250 residues: MSDSAVATSASPVIAQAASGEKKVSTKKGSSTPESKKSTAAPPSHPPTQQMVDASIKNLKERGGSSLLAIKKYIGATYKCDAQKLAPFIKKYLKNAVANGNVIQTKGKGASGSFKLSASANKDAKPKASAVEKKTKKVNASAARATKSKSSTSTTKKAAGAADKKLSKSAAAKKNVEKKKADKEKAKDAKKTGTIKAKPTTAKAKSSATKPKTPKPKTTSAKPKKVVSATTPKKTAVKKPKAKTASATKK.

Over residues 1 to 11 (MSDSAVATSAS) the composition is skewed to polar residues. Disordered regions lie at residues 1–52 (MSDS…QQMV) and 104–250 (QTKG…ATKK). One can recognise an H15 domain in the interval 44–118 (SHPPTQQMVD…GASGSFKLSA (75 aa)). The segment covering 122–133 (KDAKPKASAVEK) has biased composition (basic and acidic residues). The span at 140–161 (ASAARATKSKSSTSTTKKAAGA) shows a compositional bias: low complexity. Residues 174 to 191 (KNVEKKKADKEKAKDAKK) are compositionally biased toward basic and acidic residues. Residues 192 to 234 (TGTIKAKPTTAKAKSSATKPKTPKPKTTSAKPKKVVSATTPKK) show a composition bias toward low complexity. Over residues 235-250 (TAVKKPKAKTASATKK) the composition is skewed to basic residues.

Belongs to the histone H1/H5 family.

It localises to the nucleus. The protein resides in the chromosome. In terms of biological role, histones H1 are necessary for the condensation of nucleosome chains into higher-order structures. In Drosophila virilis (Fruit fly), this protein is Histone H1.1 (His1.1).